Reading from the N-terminus, the 201-residue chain is Potassium-transporting ATPase KdpC subunit (201 aa).

Residues 7 to 27 form a helical membrane-spanning segment; sequence PALVLLVALTAITGLAYPLAV.

This sequence belongs to the KdpC family. As to quaternary structure, the system is composed of three essential subunits: KdpA, KdpB and KdpC.

It localises to the cell inner membrane. Part of the high-affinity ATP-driven potassium transport (or Kdp) system, which catalyzes the hydrolysis of ATP coupled with the electrogenic transport of potassium into the cytoplasm. This subunit acts as a catalytic chaperone that increases the ATP-binding affinity of the ATP-hydrolyzing subunit KdpB by the formation of a transient KdpB/KdpC/ATP ternary complex. The sequence is that of Potassium-transporting ATPase KdpC subunit from Methylorubrum extorquens (strain CM4 / NCIMB 13688) (Methylobacterium extorquens).